The following is a 479-amino-acid chain: ATP synthase subunit beta (479 aa).

153 to 160 (GGAGVGKT) is a binding site for ATP.

Belongs to the ATPase alpha/beta chains family. As to quaternary structure, F-type ATPases have 2 components, CF(1) - the catalytic core - and CF(0) - the membrane proton channel. CF(1) has five subunits: alpha(3), beta(3), gamma(1), delta(1), epsilon(1). CF(0) has three main subunits: a(1), b(2) and c(9-12). The alpha and beta chains form an alternating ring which encloses part of the gamma chain. CF(1) is attached to CF(0) by a central stalk formed by the gamma and epsilon chains, while a peripheral stalk is formed by the delta and b chains.

Its subcellular location is the cell membrane. It catalyses the reaction ATP + H2O + 4 H(+)(in) = ADP + phosphate + 5 H(+)(out). Its function is as follows. Produces ATP from ADP in the presence of a proton gradient across the membrane. The catalytic sites are hosted primarily by the beta subunits. This Lactobacillus delbrueckii subsp. bulgaricus (strain ATCC BAA-365 / Lb-18) protein is ATP synthase subunit beta.